A 276-amino-acid polypeptide reads, in one-letter code: MPELPEVENVRRTLENLVTGKTIEDVIVTYPKIVKRPDDAEIFKEMLKGETIENIKRRGKFLLLYVTNYVIVSHLRMEGKFLLHQEDEPIDKHTHVRFLFTDGTELHYKDVRKFGTMHLFKKGEEMNQMPLADLGPEPFDAELTPQYLHERLQKTNRKIKVVLLDQRLLVGLGNIYVDEVLFRSQIHPEREASSLTAEEIERIYEATVTTLGEAVKRGGSTIRTYINSQGQIGSFQELLNVYGKKGEPCVTCGTILEKTVVGGRGTHYCPICQPRI.

P2 functions as the Schiff-base intermediate with DNA in the catalytic mechanism. Catalysis depends on E3, which acts as the Proton donor. K60 serves as the catalytic Proton donor; for beta-elimination activity. Residues H93 and R112 each coordinate DNA. Residues 240 to 274 (NVYGKKGEPCVTCGTILEKTVVGGRGTHYCPICQP) form an FPG-type zinc finger. The active-site Proton donor; for delta-elimination activity is R264.

The protein belongs to the FPG family. As to quaternary structure, monomer. It depends on Zn(2+) as a cofactor.

It carries out the reaction Hydrolysis of DNA containing ring-opened 7-methylguanine residues, releasing 2,6-diamino-4-hydroxy-5-(N-methyl)formamidopyrimidine.. The enzyme catalyses 2'-deoxyribonucleotide-(2'-deoxyribose 5'-phosphate)-2'-deoxyribonucleotide-DNA = a 3'-end 2'-deoxyribonucleotide-(2,3-dehydro-2,3-deoxyribose 5'-phosphate)-DNA + a 5'-end 5'-phospho-2'-deoxyribonucleoside-DNA + H(+). Its function is as follows. Involved in base excision repair of DNA damaged by oxidation or by mutagenic agents. Acts as a DNA glycosylase that recognizes and removes damaged bases. Has a preference for oxidized purines, such as 7,8-dihydro-8-oxoguanine (8-oxoG). Has AP (apurinic/apyrimidinic) lyase activity and introduces nicks in the DNA strand. Cleaves the DNA backbone by beta-delta elimination to generate a single-strand break at the site of the removed base with both 3'- and 5'-phosphates. This is Formamidopyrimidine-DNA glycosylase from Bacillus anthracis.